Reading from the N-terminus, the 434-residue chain is Protein phosphatase 2C 56 (434 aa).

The PPM-type phosphatase domain occupies 128–422 (LYGFTSICGR…DNISVVVVDL (295 aa)). Positions 177, 261, 262, 347, and 413 each coordinate Mg(2+). Positions 423 to 427 (KPRRK) match the Nuclear localization signal motif.

The protein belongs to the PP2C family. In terms of assembly, interacts with SPK1, ATHB-6, CIPK15/PKS3, GPX3, SRK2E/OST1, SRK2D, SRK2I, SCAR1, SCAR2, SCAR3 and SCARL. Binds to the PA released by the phospholipase D alpha 1 (PLDALPHA1) in response to ABA during the stomatal closure regulation. Interacts with ABA-bounded PYR1, PYL1, PYL2, PYL3, PYL4, PYL5, PYL6, PYL7, PYL8, PYL9, PYL10, and with free PYL2, PYL3, PYL4 and PYL13. Binds to RPL12B, CPK21 and CPK23. Binds to MAPKKK18. Interacts with KIN10. Interacts with phosphorylated PYL8/RCAR3. Mg(2+) is required as a cofactor. Requires Mn(2+) as cofactor. Expressed in seeds and seedlings. In roots, confined to lateral root caps and columella cells.

It localises to the nucleus. The protein resides in the cytoplasm. Its subcellular location is the cell membrane. The catalysed reaction is O-phospho-L-seryl-[protein] + H2O = L-seryl-[protein] + phosphate. The enzyme catalyses O-phospho-L-threonyl-[protein] + H2O = L-threonyl-[protein] + phosphate. Its activity is regulated as follows. Phosphatase activity repressed by oxidized GPX3 and phosphatidic acid (PA). PA is produced by PLD alpha 1 in response to ABA. Repressed by PYR/PYL/RCAR ABA receptors in an ABA-dependent manner. In terms of biological role, key component and repressor of the abscisic acid (ABA) signaling pathway that regulates numerous ABA responses, such as stomatal closure, osmotic water permeability of the plasma membrane (Pos), drought-induced resistance and rhizogenesis, response to glucose, high light stress, seed germination and inhibition of vegetative growth. During the stomatal closure regulation, modulates the inward calcium-channel permeability as well as the actin reorganization in guard cells in response to ABA. Involved in the resistance to the bacterial pathogen Pseudomonas syringae pv. tomato. Controls negatively fibrillin expression that is involved in mediating ABA-induced photoprotection. May be involved in ABA content regulation. Plays a role in the Pro accumulation in response to reduced water availability (low water potential). Required for the ABA negative regulation of the ethylene-induced hyponastic growth. Involved in acquired thermotolerance of root growth and seedling survival. Activates/represses SRK2E/OST1 in response to ABA-dependent stimuli, especially in stomata closure regulation involving SLAC1. Represses MAPKKK18 activity and promotes MAPKKK18 degradation by the proteasome pathway upon abscisic acid (ABA) treatment. Represses KIN10 activity by the specific dephosphorylation of its T-loop Thr-198, leading to a poststress inactivation of SnRK1 signaling. Restricts MAPKKK20 activity by dephosphorylation. In Arabidopsis thaliana (Mouse-ear cress), this protein is Protein phosphatase 2C 56.